A 202-amino-acid chain; its full sequence is Dephospho-CoA kinase (202 aa).

A DPCK domain is found at 5–202 (ILGLTGGIGS…FYLTLRGGQP (198 aa)). 13-18 (GSGKSA) is an ATP binding site.

It belongs to the CoaE family.

The protein resides in the cytoplasm. The enzyme catalyses 3'-dephospho-CoA + ATP = ADP + CoA + H(+). It functions in the pathway cofactor biosynthesis; coenzyme A biosynthesis; CoA from (R)-pantothenate: step 5/5. In terms of biological role, catalyzes the phosphorylation of the 3'-hydroxyl group of dephosphocoenzyme A to form coenzyme A. The polypeptide is Dephospho-CoA kinase (Stutzerimonas stutzeri (Pseudomonas stutzeri)).